Reading from the N-terminus, the 245-residue chain is MKIDVLTLFPKMVEVPLHESIVGKAIEAGKLNVDVTDFRQYSTNKHGNVDDYPYGGGAGMLLTPQPIFDAMEHVKSQNNQSTGRVILVDPGGKQFNQTMAEDFAKEEHLTFICGHYEGYDERIKTLVDDEVSLGDFVITGGELAALTMIDATVRLLPDILGNKDSAVDDSFSTGLLEFPQYTRPEDFRGLKVPSILLSGNHGKIDEWRRTESLKKTLARRPDLLETAQLTPEDKQILRELQTPDL.

S-adenosyl-L-methionine contacts are provided by residues Gly-114 and Leu-133 to Ile-138.

Belongs to the RNA methyltransferase TrmD family. Homodimer.

The protein resides in the cytoplasm. The catalysed reaction is guanosine(37) in tRNA + S-adenosyl-L-methionine = N(1)-methylguanosine(37) in tRNA + S-adenosyl-L-homocysteine + H(+). Functionally, specifically methylates guanosine-37 in various tRNAs. In Pediococcus pentosaceus (strain ATCC 25745 / CCUG 21536 / LMG 10740 / 183-1w), this protein is tRNA (guanine-N(1)-)-methyltransferase.